We begin with the raw amino-acid sequence, 117 residues long: MAKLLSRNDARKAKHLRIRNKIRKTTNLPRVFVYKSLQNFYAQLFDDKLNKTIVSLGTSKNKEYSGNIAAAKKLGHEMGALLKTKKIDKIVFDRSGYIYHGRVKAFAEAMREEGVKF.

This sequence belongs to the universal ribosomal protein uL18 family. As to quaternary structure, part of the 50S ribosomal subunit; part of the 5S rRNA/L5/L18/L25 subcomplex. Contacts the 5S and 23S rRNAs.

This is one of the proteins that bind and probably mediate the attachment of the 5S RNA into the large ribosomal subunit, where it forms part of the central protuberance. This Mycoplasma mobile (strain ATCC 43663 / 163K / NCTC 11711) (Mesomycoplasma mobile) protein is Large ribosomal subunit protein uL18.